The chain runs to 573 residues: Methionine--tRNA ligase (573 aa).

Positions 10-20 (PYVNSVPHLGN) match the 'HIGH' region motif. Cys-143, Cys-146, Cys-156, and Cys-159 together coordinate Zn(2+). The 'KMSKS' region signature appears at 333–337 (KFSKS). Residue Lys-336 coordinates ATP.

This sequence belongs to the class-I aminoacyl-tRNA synthetase family. MetG type 1 subfamily. Requires Zn(2+) as cofactor.

It localises to the cytoplasm. The enzyme catalyses tRNA(Met) + L-methionine + ATP = L-methionyl-tRNA(Met) + AMP + diphosphate. Its function is as follows. Is required not only for elongation of protein synthesis but also for the initiation of all mRNA translation through initiator tRNA(fMet) aminoacylation. In Saccharolobus solfataricus (strain ATCC 35092 / DSM 1617 / JCM 11322 / P2) (Sulfolobus solfataricus), this protein is Methionine--tRNA ligase.